The chain runs to 112 residues: Putative transposase YkgN (112 aa).

This sequence belongs to the transposase 8 family.

The polypeptide is Putative transposase YkgN (ykgN) (Escherichia coli (strain K12)).